We begin with the raw amino-acid sequence, 89 residues long: HssA/B-like protein DDB_G0295685 (89 aa).

The protein belongs to the hssA/B family.

The chain is HssA/B-like protein DDB_G0295685 from Dictyostelium discoideum (Social amoeba).